Reading from the N-terminus, the 646-residue chain is uncharacterized protein (646 aa).

10 consecutive transmembrane segments (helical) span residues 20–40 (AYFLSCVFAVSVFFVFTSFIF), 54–74 (LVKTCLSAALVVIIVFCIFFI), 115–135 (LAAIAAGIGAGLLFSKLFFMI), 154–174 (AFVMTIAGFLILFQTLLILSL), 203–223 (TVLSLLCLGSGYYLSATANAI), 232–252 (ILILVLIGTYFFFTQSSVAFF), 285–305 (LFLTSVITAVILTATGVIYMF), 523–543 (GVALMLFIGLFVSVLFFIVQG), 582–602 (IGFLFFIPFIAGTIHAGFAYA), and 613–633 (FLEAVIVIFIYFVFQALYYIV).

This sequence belongs to the ABC-4 integral membrane protein family.

The protein localises to the cell membrane. This is an uncharacterized protein from Bacillus subtilis (strain 168).